The following is a 665-amino-acid chain: DNA mismatch repair protein MutL (665 aa).

Polar residues-rich tracts occupy residues 348 to 361 (LEATAASNPDNGLS) and 407 to 421 (PSSQGDYQPQDNSRY). Disordered stretches follow at residues 348–370 (LEATAASNPDNGLSPSRGHAEEG) and 385–445 (VHRG…STSA). Low complexity predominate over residues 426 to 445 (YSTNAASTNTASNYSHSTSA).

This sequence belongs to the DNA mismatch repair MutL/HexB family.

Its function is as follows. This protein is involved in the repair of mismatches in DNA. It is required for dam-dependent methyl-directed DNA mismatch repair. May act as a 'molecular matchmaker', a protein that promotes the formation of a stable complex between two or more DNA-binding proteins in an ATP-dependent manner without itself being part of a final effector complex. This is DNA mismatch repair protein MutL from Shewanella denitrificans (strain OS217 / ATCC BAA-1090 / DSM 15013).